The primary structure comprises 177 residues: Early nodulin-like protein 15 (177 aa).

Residues 1–24 (MASSSLLVTIFLCISVFFFSSVNA) form the signal peptide. One can recognise a Phytocyanin domain in the interval 25 to 129 (NEVTVGGKSG…GQKLRLVVIT (105 aa)). A disulfide bridge connects residues cysteine 83 and cysteine 117. Asparagine 84 carries N-linked (GlcNAc...) asparagine glycosylation. A lipid anchor (GPI-anchor amidated serine) is attached at serine 153. A propeptide spans 154–177 (GAAKLAGGFSVVFGLVLGLWAFFF) (removed in mature form).

The protein belongs to the early nodulin-like (ENODL) family. As to expression, mostly expressed in seedlings, siliques and flowers, and, to a lower extent, in roots, stems and seeds, but barely in leaves.

It is found in the cell membrane. Its function is as follows. May act as a carbohydrate transporter. Required, together with ENODL11, ENODL12, ENODL13, ENODL14 and ENODL15, for male-female communication and pollen tube reception and burst at the synergid cell surface of the female gametophyte. In Arabidopsis thaliana (Mouse-ear cress), this protein is Early nodulin-like protein 15.